Here is a 347-residue protein sequence, read N- to C-terminus: N-acetyl-gamma-glutamyl-phosphate reductase (347 aa).

Cys-152 is a catalytic residue.

The protein belongs to the NAGSA dehydrogenase family. Type 1 subfamily.

The protein resides in the cytoplasm. It carries out the reaction N-acetyl-L-glutamate 5-semialdehyde + phosphate + NADP(+) = N-acetyl-L-glutamyl 5-phosphate + NADPH + H(+). The protein operates within amino-acid biosynthesis; L-arginine biosynthesis; N(2)-acetyl-L-ornithine from L-glutamate: step 3/4. Functionally, catalyzes the NADPH-dependent reduction of N-acetyl-5-glutamyl phosphate to yield N-acetyl-L-glutamate 5-semialdehyde. The polypeptide is N-acetyl-gamma-glutamyl-phosphate reductase (Neisseria gonorrhoeae (strain ATCC 700825 / FA 1090)).